A 78-amino-acid chain; its full sequence is Cytochrome b-c1 complex subunit 10, mitochondrial (78 aa).

Topologically, residues 1–26 (MVSYVKGPAYKALSHFGKLNAPLVRS) are mitochondrial matrix. Residues 27 to 46 (YIPNLVFWGAAAGGAVATFT) form a helical membrane-spanning segment. Topologically, residues 47–78 (EGVPLFQKTFYEKIPFFGQHWIYNPDPEDVPV) are mitochondrial intermembrane.

This sequence belongs to the UQCR11/QCR10 family. In terms of assembly, component of the ubiquinol-cytochrome c oxidoreductase (cytochrome b-c1 complex, complex III, CIII), a multisubunit enzyme composed of 10 subunits. The complex is composed of 3 respiratory subunits cytochrome b (COB), cytochrome c1 (CYT1) and Rieske protein (RIP1), 2 core protein subunits COR1 and QCR2, and 5 low-molecular weight protein subunits QCR6, QCR7, QCR8, QCR9 and QCR10. The complex exists as an obligatory dimer and forms supercomplexes (SCs) in the inner mitochondrial membrane with a monomer or a dimer of cytochrome c oxidase (complex IV, CIV), resulting in 2 different assemblies (supercomplexes III(2)IV and III(2)IV(2)).

It is found in the mitochondrion inner membrane. Component of the ubiquinol-cytochrome c oxidoreductase, a multisubunit transmembrane complex that is part of the mitochondrial electron transport chain which drives oxidative phosphorylation. The complex plays an important role in the uptake of multiple carbon sources present in different host niches. The protein is Cytochrome b-c1 complex subunit 10, mitochondrial of Candida albicans (strain SC5314 / ATCC MYA-2876) (Yeast).